A 305-amino-acid chain; its full sequence is tRNA pseudouridine synthase B (305 aa).

The active-site Nucleophile is aspartate 41.

Belongs to the pseudouridine synthase TruB family. Type 1 subfamily.

The catalysed reaction is uridine(55) in tRNA = pseudouridine(55) in tRNA. Responsible for synthesis of pseudouridine from uracil-55 in the psi GC loop of transfer RNAs. The chain is tRNA pseudouridine synthase B from Prochlorococcus marinus subsp. pastoris (strain CCMP1986 / NIES-2087 / MED4).